The following is a 164-amino-acid chain: Protein-export protein SecB (164 aa).

This sequence belongs to the SecB family. Homotetramer, a dimer of dimers. One homotetramer interacts with 1 SecA dimer.

It is found in the cytoplasm. In terms of biological role, one of the proteins required for the normal export of preproteins out of the cell cytoplasm. It is a molecular chaperone that binds to a subset of precursor proteins, maintaining them in a translocation-competent state. It also specifically binds to its receptor SecA. The sequence is that of Protein-export protein SecB from Zymomonas mobilis subsp. mobilis (strain ATCC 31821 / ZM4 / CP4).